A 332-amino-acid polypeptide reads, in one-letter code: 2,3-diketo-L-gulonate reductase (332 aa).

His44 functions as the Proton donor in the catalytic mechanism. Residues 168–174 (ITMIDMS), 224–225 (WK), and 304–306 (GHE) contribute to the NAD(+) site.

It belongs to the LDH2/MDH2 oxidoreductase family. DlgD subfamily. As to quaternary structure, homodimer.

The protein localises to the cytoplasm. The catalysed reaction is 3-dehydro-L-gulonate + NAD(+) = 2,3-dioxo-L-gulonate + NADH + H(+). It catalyses the reaction 3-dehydro-L-gulonate + NADP(+) = 2,3-dioxo-L-gulonate + NADPH + H(+). Functionally, catalyzes the reduction of 2,3-diketo-L-gulonate in the presence of NADH, to form 3-keto-L-gulonate. This chain is 2,3-diketo-L-gulonate reductase, found in Citrobacter koseri (strain ATCC BAA-895 / CDC 4225-83 / SGSC4696).